A 125-amino-acid polypeptide reads, in one-letter code: Secreted RxLR effector protein 22 (125 aa).

The N-terminal stretch at 1–26 (MRLIYSALVTAAAMVAISNGSTPARG) is a signal peptide. The interval 21-66 (STPARGNEVETRSLRGGNEVDSSMSDDGERAARGGGRVRSQASGVT) is disordered. The RxLR-dEER signature appears at 32-50 (RSLRGGNEVDSSMSDDGER).

It belongs to the RxLR effector family.

The protein resides in the secreted. The protein localises to the host nucleus. Its function is as follows. Effector that acts as a broad suppressor of cell death to interrupt plant immunity. Inhibits cell death induced by cell death-inducing proteins, including the PAMP elicitor INF1 from P.infestans. The polypeptide is Secreted RxLR effector protein 22 (Plasmopara viticola (Downy mildew of grapevine)).